Here is a 1010-residue protein sequence, read N- to C-terminus: Lethal(2) giant larvae protein homolog SRO77 (1010 aa).

WD repeat units follow at residues Thr47–Thr80, Ile87–Phe122, Ile127–Ile163, Ser182–Phe215, Val240–Arg275, Ala299–Phe364, Leu372–Ile407, Val431–Asn504, Lys518–Ile595, Val602–Asn637, Val649–Lys700, Gly709–Leu763, Ile768–Arg815, and Ser829–Asn852. Residues Ser932–Asn958 are disordered.

It belongs to the WD repeat L(2)GL family. As to quaternary structure, interacts with SEC9.

Acts as an allosteric regulator of polarized exocytosis by promoting the targeted fusion of vesicles with the plasma membrane. Involved in maintenance of ion homeostasis in cells exposed to NaCl stress. May be involved in the targeting of the myosin proteins to their intrinsic pathways. Multicopy suppressor of RHO3. May also participate in the maintenance of cell polarity and bud growth. The sequence is that of Lethal(2) giant larvae protein homolog SRO77 (SRO77) from Saccharomyces cerevisiae (strain ATCC 204508 / S288c) (Baker's yeast).